Here is a 398-residue protein sequence, read N- to C-terminus: Yellow-related salivary protein SP04 (398 aa).

An N-terminal signal peptide occupies residues 1 to 18 (MKWFLFLLSTIFVQGILG). The disordered stretch occupies residues 73–94 (TLTEIERKKHPERSPPLSKFSG). The segment covering 75-85 (TEIERKKHPER) has biased composition (basic and acidic residues).

This sequence belongs to the major royal jelly protein family. In terms of tissue distribution, female salivary gland (at protein level).

Its subcellular location is the secreted. Functionally, probably modulates blood feeding of sand flies on vertebrate species by binding and sequestering different mediators involved in the host response. Binds biogenic amines. Binds serotonin with high affinity. Binds histamine with low affinity. This Phlebotomus argentipes (Phlebotomine sand fly) protein is Yellow-related salivary protein SP04.